Consider the following 316-residue polypeptide: SWR complex protein 2 (316 aa).

Disordered regions lie at residues 1-81 (MSAT…GEEV), 93-127 (KRKI…KKKY), and 153-180 (ETRL…TMTQ). Over residues 20–31 (KMRELLEKEHLR) the composition is skewed to basic and acidic residues. Positions 20-95 (KMRELLEKEH…RDEERIKKRK (76 aa)) form a coiled coil. The span at 40 to 56 (EKEDEEYNIEEEEEAER) shows a compositional bias: acidic residues. Phosphoserine occurs at positions 64 and 65. Residues 70 to 81 (ELKKLEEEGEEV) are compositionally biased toward basic and acidic residues. Positions 167 to 180 (VSASANRQKGTMTQ) are enriched in polar residues.

Belongs to the VPS72/YL1 family. In terms of assembly, component of the SWR1 chromatin-remodeling complex.

The protein resides in the nucleus. In terms of biological role, participates in the catalytic exchange of histone H2A for the H2A variant pht1, an euchromatin-specific factor, leading to chromatin remodeling and changes in transcription of targeted genes. The sequence is that of SWR complex protein 2 (swc2) from Schizosaccharomyces pombe (strain 972 / ATCC 24843) (Fission yeast).